A 658-amino-acid chain; its full sequence is Heat shock protein homolog SSE1 (658 aa).

Positions 614–627 (KRKEEERKSKKENA) are enriched in basic and acidic residues. A disordered region spans residues 614–658 (KRKEEERKSKKENAQEGTSSKPESKEESEAKEDNDEESDVASIDE). Residues 642–658 (EAKEDNDEESDVASIDE) show a composition bias toward acidic residues.

The protein belongs to the heat shock protein 70 family.

The protein localises to the cytoplasm. Functionally, required for normal growth at various temperatures. The chain is Heat shock protein homolog SSE1 (SSE1) from Encephalitozoon cuniculi (strain GB-M1) (Microsporidian parasite).